Consider the following 750-residue polypeptide: MFSIKPGPRNLPIDNPTLLSWNITDGDLNSKLNTLEYLNCITNIINSCGVYPQGLKDREIISTFHAEKVINDLLKNDYKISLSPDTTYRELNKAAQRSITAPDRIGERKTWVYQRDTMIERGDNSGVYQYGRAEHFTHIISDKPSPKDKYVAYAINIPDYELAADVYNINVTSPSGQQETFKILINLEHLRQTLERKSLTAVQKSQCEIITPKKPGEAILHAFNATYQQIRENMSEFARCHYGYIQIPPVTTFRADGPETPEEEKGYWFHAYQPEDLCTIHNPMGDLQDFIALVKDAKKFGIDIIPDYTFNFMGIGGSGKNDLDYPSADIRAKISKDIEGGIPGYWQGQVLIPFIKDPVTKERKQIHPEDIHLTAKDFEASKDNISKDEWENLHALKEKRLNGMPKTTPKSDQVIMLQNQYVREMRKYGVRGLRYDAAKHSKHEQIERSITPPLKNYNERLHNTNLFNPKYHKKAVMNYMEYLVTCQLDEQQMSSLLYERDDLSAIDFSLLMKTIKAFSFGGDLQTLASKPGSTISSIPSERRILININHDFPNNGNLFNDFLFNHQQDEQLAMAYIAALPFSRPLVYWDGQVLKSTTEIKNYDGSTRVGGEAWLNKGCSTYQQLYNEFHALYIDKAGIWSAFEGVSATKNVLAFSRGDSVNINHSPHDGLVIINKGNEEVEGTWPNKLQPGIYKNMGSNSVNIIINNTRKIIPPGKVFTLRGGTLNINIPGRSALLLGKTGEPPNYLYL.

This is an uncharacterized protein from Escherichia coli (strain K12).